The primary structure comprises 503 residues: 3-octaprenyl-4-hydroxybenzoate carboxy-lyase (503 aa).

Mn(2+) is bound at residue N176. Residues I179–R181, R193–L195, and R198–G199 each bind prenylated FMN. Mn(2+) is bound at residue E242. The active-site Proton donor is D303.

It belongs to the UbiD family. In terms of assembly, homohexamer. It depends on prenylated FMN as a cofactor. Requires Mn(2+) as cofactor.

Its subcellular location is the cell membrane. The enzyme catalyses a 4-hydroxy-3-(all-trans-polyprenyl)benzoate + H(+) = a 2-(all-trans-polyprenyl)phenol + CO2. It participates in cofactor biosynthesis; ubiquinone biosynthesis. In terms of biological role, catalyzes the decarboxylation of 3-octaprenyl-4-hydroxy benzoate to 2-octaprenylphenol, an intermediate step in ubiquinone biosynthesis. The protein is 3-octaprenyl-4-hydroxybenzoate carboxy-lyase of Ralstonia pickettii (strain 12J).